The primary structure comprises 529 residues: Peptide chain release factor 3 (529 aa).

Residues 11–280 enclose the tr-type G domain; sequence SKRRTFAIIS…GLTEWAPAPK (270 aa). Residues 20 to 27, 88 to 92, and 142 to 145 each bind GTP; these read SHPDAGKT, DTPGH, and NKLD.

Belongs to the TRAFAC class translation factor GTPase superfamily. Classic translation factor GTPase family. PrfC subfamily.

It localises to the cytoplasm. In terms of biological role, increases the formation of ribosomal termination complexes and stimulates activities of RF-1 and RF-2. It binds guanine nucleotides and has strong preference for UGA stop codons. It may interact directly with the ribosome. The stimulation of RF-1 and RF-2 is significantly reduced by GTP and GDP, but not by GMP. This Vibrio campbellii (strain ATCC BAA-1116) protein is Peptide chain release factor 3.